The primary structure comprises 833 residues: Leucine--tRNA ligase (833 aa).

The 'HIGH' region motif lies at 41 to 52; sequence PYPSGAGLHVGH. Positions 610–614 match the 'KMSKS' region motif; sequence KMSKS. K613 contributes to the ATP binding site.

Belongs to the class-I aminoacyl-tRNA synthetase family.

The protein resides in the cytoplasm. It catalyses the reaction tRNA(Leu) + L-leucine + ATP = L-leucyl-tRNA(Leu) + AMP + diphosphate. The chain is Leucine--tRNA ligase from Streptococcus gordonii (strain Challis / ATCC 35105 / BCRC 15272 / CH1 / DL1 / V288).